A 250-amino-acid polypeptide reads, in one-letter code: Coproheme decarboxylase (250 aa).

Fe-coproporphyrin III is bound by residues R131, 145 to 149, H172, and Q185; that span reads YPMNK. The active site involves Y145.

This sequence belongs to the ChdC family. Type 1 subfamily. Requires Fe-coproporphyrin III as cofactor.

It catalyses the reaction Fe-coproporphyrin III + 2 H2O2 + 2 H(+) = heme b + 2 CO2 + 4 H2O. The catalysed reaction is Fe-coproporphyrin III + H2O2 + H(+) = harderoheme III + CO2 + 2 H2O. The enzyme catalyses harderoheme III + H2O2 + H(+) = heme b + CO2 + 2 H2O. It participates in porphyrin-containing compound metabolism; protoheme biosynthesis. Its function is as follows. Involved in coproporphyrin-dependent heme b biosynthesis. Catalyzes the decarboxylation of Fe-coproporphyrin III (coproheme) to heme b (protoheme IX), the last step of the pathway. The reaction occurs in a stepwise manner with a three-propionate intermediate. This Staphylococcus aureus (strain Mu50 / ATCC 700699) protein is Coproheme decarboxylase.